We begin with the raw amino-acid sequence, 267 residues long: Thyroxine 5-deiodinase (267 aa).

The Cytoplasmic portion of the chain corresponds to 1–15; it reads MHDSGGVQMARALKH. Residues 16–36 traverse the membrane as a helical; Signal-anchor for type II membrane protein segment; the sequence is AALCLMLLPRFLLAAVMLWLL. Topologically, residues 37–267 are extracellular; that stretch reads DFLCIRKKVL…VNSQTAVLHV (231 aa). Residue selenocysteine 131 is part of the active site. Residue selenocysteine 131 is a non-standard amino acid, selenocysteine.

Belongs to the iodothyronine deiodinase family. In terms of assembly, monomer. Homodimer. May undergo minor heretodimerization with DIO1 and DIO2.

It localises to the cell membrane. The protein localises to the endosome membrane. It carries out the reaction 3,3',5'-triiodo-L-thyronine + iodide + A + H(+) = L-thyroxine + AH2. The catalysed reaction is 3,3'-diiodo-L-thyronine + iodide + A + H(+) = 3,3',5-triiodo-L-thyronine + AH2. It catalyses the reaction 3-iodo-L-thyronine + iodide + A + H(+) = 3,5-diiodo-L-thyronine + AH2. The enzyme catalyses L-thyronine + iodide + A + H(+) = 3-iodo-L-thyronine + AH2. It carries out the reaction 3',5'-diiodo-L-thyronine + iodide + A + H(+) = 3,3',5'-triiodo-L-thyronine + AH2. The catalysed reaction is 3'-iodo-L-thyronine + iodide + A + H(+) = 3,3'-diiodo-L-thyronine + AH2. It catalyses the reaction 3,3',5'-triiodothyronamine + iodide + A + H(+) = 3,3',5,5'-tetraiodothyronamine + AH2. The enzyme catalyses 3',5'-diiodothyronamine + iodide + A + H(+) = 3,3',5'-triiodothyronamine + AH2. It carries out the reaction 3,3'-diiodothyronamine + iodide + A + H(+) = 3,3',5-triiodothyronamine + AH2. The catalysed reaction is 3-iodothyronamine + iodide + A + H(+) = 3,5-diiodothyronamine + AH2. It catalyses the reaction 3'-iodothyronamine + iodide + A + H(+) = 3,3'-diiodothyronamine + AH2. The enzyme catalyses thyronamine + iodide + A + H(+) = 3-iodothyronamine + AH2. In terms of biological role, plays a crucial role in the metabolism of thyroid hormones (TH) and has specific roles in TH activation and inactivation by deiodination. Catalyzes the deiodination of L-thyroxine (T4) to 3,3',5'-triiodothyronine (rT3), 3,5,3'-triiodothyronine (T3) to 3,3'-diiodothyronine (3,3'-T2), 3,5-diiodothyronine (3,5-T2) to 3-monoiodothyronine (3-T1), rT3 to 3',5'-diiodothyronine (3',5'-T2) and 3,3'-T2 to 3'-monoiodothyronine (3'-T1) via inner-ring deiodination (IRD). Catalyzes the deiodination of 3-T1 to L-thyronine (T0) via outer-ring deiodination (ORD). Catalyzes the tyrosyl ring deiodinations of 3,3',5,5'-tetraiodothyronamine, 3,3',5'-triiodothyronamine, 3,5,3'-triiodothyronamine, 3,5-diiodothyronamine, 3,3'-diiodothyronamine and 3-iodothyronamine. This chain is Thyroxine 5-deiodinase (dio3), found in Sparus aurata (Gilthead sea bream).